Consider the following 700-residue polypeptide: uncharacterized protein (700 aa).

9 consecutive transmembrane segments (helical) span residues 24 to 44 (VLCL…GLLF), 67 to 87 (LIIG…LLAK), 89 to 109 (VPLP…AELG), 115 to 135 (LLPA…YMPV), 139 to 159 (LLIY…WFWI), 383 to 403 (LMGT…VLLV), 420 to 440 (VGTV…IPEG), 461 to 481 (YGWA…LLWL), and 491 to 511 (LIDT…LWPQ).

This sequence belongs to the YccS/YhfK family.

It localises to the cell membrane. This is an uncharacterized protein from Escherichia coli (strain K12).